Here is a 662-residue protein sequence, read N- to C-terminus: DNA ligase (662 aa).

NAD(+) is bound by residues 34-38 (DYDYD), 83-84 (SI), and Glu-113. The N6-AMP-lysine intermediate role is filled by Lys-115. Residues Arg-136, Glu-172, Lys-286, and Lys-310 each contribute to the NAD(+) site. Positions 404, 407, 422, and 427 each coordinate Zn(2+). A BRCT domain is found at 583–662 (RESSSCLGKT…NDLLKILYPN (80 aa)).

The protein belongs to the NAD-dependent DNA ligase family. LigA subfamily. Requires Mg(2+) as cofactor. The cofactor is Mn(2+).

The enzyme catalyses NAD(+) + (deoxyribonucleotide)n-3'-hydroxyl + 5'-phospho-(deoxyribonucleotide)m = (deoxyribonucleotide)n+m + AMP + beta-nicotinamide D-nucleotide.. Its function is as follows. DNA ligase that catalyzes the formation of phosphodiester linkages between 5'-phosphoryl and 3'-hydroxyl groups in double-stranded DNA using NAD as a coenzyme and as the energy source for the reaction. It is essential for DNA replication and repair of damaged DNA. The protein is DNA ligase of Chlamydia caviae (strain ATCC VR-813 / DSM 19441 / 03DC25 / GPIC) (Chlamydophila caviae).